The following is a 192-amino-acid chain: Large ribosomal subunit protein uL6 (192 aa).

This sequence belongs to the universal ribosomal protein uL6 family. In terms of assembly, component of the large ribosomal subunit.

The protein resides in the cytoplasm. Component of the large ribosomal subunit. The ribosome is a large ribonucleoprotein complex responsible for the synthesis of proteins in the cell. This is Large ribosomal subunit protein uL6 (rpl9) from Ictalurus punctatus (Channel catfish).